We begin with the raw amino-acid sequence, 220 residues long: Phosphoserine phosphatase (220 aa).

Catalysis depends on D11, which acts as the Nucleophile. The Mg(2+) site is built by D11 and D13. Residue D13 is the Proton donor of the active site. Residues E20, R56, 99–100 (SG), and K144 contribute to the substrate site. A Mg(2+)-binding site is contributed by D167. Residue N170 coordinates substrate.

This sequence belongs to the HAD-like hydrolase superfamily. SerB family. Requires Mg(2+) as cofactor.

The enzyme catalyses O-phospho-L-serine + H2O = L-serine + phosphate. It catalyses the reaction O-phospho-D-serine + H2O = D-serine + phosphate. Its pathway is amino-acid biosynthesis; L-serine biosynthesis; L-serine from 3-phospho-D-glycerate: step 3/3. The protein is Phosphoserine phosphatase of Idiomarina loihiensis (strain ATCC BAA-735 / DSM 15497 / L2-TR).